A 157-amino-acid polypeptide reads, in one-letter code: uncharacterized protein (157 aa).

Positions 1–23 are cleaved as a signal peptide; sequence MEALRRAHEATLRLLLCRPWASG.

It is found in the secreted. This is an uncharacterized protein from Mus musculus (Mouse).